A 233-amino-acid polypeptide reads, in one-letter code: Uracil-DNA glycosylase (233 aa).

The Proton acceptor role is filled by D70.

The protein belongs to the uracil-DNA glycosylase (UDG) superfamily. UNG family.

Its subcellular location is the cytoplasm. The enzyme catalyses Hydrolyzes single-stranded DNA or mismatched double-stranded DNA and polynucleotides, releasing free uracil.. Excises uracil residues from the DNA which can arise as a result of misincorporation of dUMP residues by DNA polymerase or due to deamination of cytosine. In Helicobacter pylori (strain Shi470), this protein is Uracil-DNA glycosylase.